We begin with the raw amino-acid sequence, 519 residues long: Ribonuclease Y (519 aa).

A helical transmembrane segment spans residues 6–26 (VPFYLLIFLVGIGLGVLTFWA). Residues 209-272 (TVCTVTIPNE…HIAKMALTEL (64 aa)) enclose the KH domain. Residues 335 to 428 (VLDHSLEVSH…CSAADAISAS (94 aa)) form the HD domain.

The protein belongs to the RNase Y family.

Its subcellular location is the cell membrane. Endoribonuclease that initiates mRNA decay. This chain is Ribonuclease Y, found in Protochlamydia amoebophila (strain UWE25).